The following is a 130-amino-acid chain: Small ribosomal subunit protein uS11 (130 aa).

The protein belongs to the universal ribosomal protein uS11 family. As to quaternary structure, part of the 30S ribosomal subunit. Interacts with proteins S7 and S18. Binds to IF-3.

Located on the platform of the 30S subunit, it bridges several disparate RNA helices of the 16S rRNA. Forms part of the Shine-Dalgarno cleft in the 70S ribosome. The sequence is that of Small ribosomal subunit protein uS11 from Moorella thermoacetica (strain ATCC 39073 / JCM 9320).